Reading from the N-terminus, the 86-residue chain is Large ribosomal subunit protein eL20 (86 aa).

Belongs to the eukaryotic ribosomal protein eL20 family. As to quaternary structure, part of the 50S ribosomal subunit. Binds 23S rRNA.

This chain is Large ribosomal subunit protein eL20, found in Sulfolobus acidocaldarius (strain ATCC 33909 / DSM 639 / JCM 8929 / NBRC 15157 / NCIMB 11770).